The following is a 301-amino-acid chain: Inactive C-alpha-formylglycine-generating enzyme 2 (301 aa).

An N-terminal signal peptide occupies residues 1–25; it reads MGISLSPLLTVLSLLSGRWLELGNG. Residues Cys156 and Cys290 are joined by a disulfide bond. Asn191 is a glycosylation site (N-linked (GlcNAc...) asparagine). Asn194, Leu195, Asp208, Phe210, Asp229, Gly232, Val234, and Glu236 together coordinate Ca(2+). Residues 274–284 show a composition bias toward polar residues; the sequence is RMGNTPDSASD. Residues 274-301 are disordered; sequence RMGNTPDSASDNLGFRCASGAGRPPGEL. A Non-canonical ER retention motif motif is present at residues 298–301; sequence PGEL.

Belongs to the sulfatase-modifying factor family. As to quaternary structure, homodimer and heterodimer with SUMF1.

The protein resides in the endoplasmic reticulum lumen. Lacks formylglycine generating activity and is unable to convert newly synthesized inactive sulfatases to their active form. Inhibits the activation of sulfatases by SUMF1. The sequence is that of Inactive C-alpha-formylglycine-generating enzyme 2 from Bos taurus (Bovine).